The sequence spans 254 residues: Phosphoribosylaminoimidazole-succinocarboxamide synthase (254 aa).

This sequence belongs to the SAICAR synthetase family.

It carries out the reaction 5-amino-1-(5-phospho-D-ribosyl)imidazole-4-carboxylate + L-aspartate + ATP = (2S)-2-[5-amino-1-(5-phospho-beta-D-ribosyl)imidazole-4-carboxamido]succinate + ADP + phosphate + 2 H(+). It functions in the pathway purine metabolism; IMP biosynthesis via de novo pathway; 5-amino-1-(5-phospho-D-ribosyl)imidazole-4-carboxamide from 5-amino-1-(5-phospho-D-ribosyl)imidazole-4-carboxylate: step 1/2. This chain is Phosphoribosylaminoimidazole-succinocarboxamide synthase, found in Rhodospirillum centenum (strain ATCC 51521 / SW).